The following is a 66-amino-acid chain: Large ribosomal subunit protein bL35 (66 aa).

This sequence belongs to the bacterial ribosomal protein bL35 family.

The polypeptide is Large ribosomal subunit protein bL35 (Thermodesulfovibrio yellowstonii (strain ATCC 51303 / DSM 11347 / YP87)).